The sequence spans 335 residues: tRNA pseudouridine synthase D (335 aa).

The active-site Nucleophile is D77. One can recognise a TRUD domain in the interval 152–308 (GFPNYFTEQR…AQNLNWQFEP (157 aa)).

The protein belongs to the pseudouridine synthase TruD family.

It carries out the reaction uridine(13) in tRNA = pseudouridine(13) in tRNA. In terms of biological role, responsible for synthesis of pseudouridine from uracil-13 in transfer RNAs. This Actinobacillus succinogenes (strain ATCC 55618 / DSM 22257 / CCUG 43843 / 130Z) protein is tRNA pseudouridine synthase D.